Consider the following 118-residue polypeptide: Large ribosomal subunit protein bL20 (118 aa).

It belongs to the bacterial ribosomal protein bL20 family.

Binds directly to 23S ribosomal RNA and is necessary for the in vitro assembly process of the 50S ribosomal subunit. It is not involved in the protein synthesizing functions of that subunit. The polypeptide is Large ribosomal subunit protein bL20 (Bacillus cytotoxicus (strain DSM 22905 / CIP 110041 / 391-98 / NVH 391-98)).